The primary structure comprises 467 residues: MNELNKTPKEIVKELDQYIVGQQAAKKSVAVALRNRYRRLQLEENMQQDITPKNLLMIGPTGVGKTEIARRLAKIVNAPFVKVEATKFTEVGYVGRDVESMVRDLVENAIQIVEKQQYSRVYAQALKKANQRLVKVLVPGIKKEQKQAGGNQFEQMMNMFNMAQQQQEAQEEVTEDIRTNRRTILEQLEKGLLDNREVTIEIEEPKKTMPAMNNGLEQMGIDLNETLGALSPKKKIERTVTVKEAQELLVKEESAKIVNDADIHSEAIRLAESSGIIFIDEIDKITSKSQQNSGEVSREGVQRDILPIVEGSQVNTKYGPLQTDHILFIASGAFHLSKPSDLIPELQGRFPIRVELDDLTADDFVSILTEPNNALIKQYVALIGTENVSVIFTKEAIERLAHIAYDVNRDTDNIGARRLHTILERLLEDLLYEAPDMQMGEITITEAYVNEKLNDIVQNEDLSRYIL.

Residues Val20, 62–67 (GVGKTE), Asp280, Glu345, and Arg417 each bind ATP.

The protein belongs to the ClpX chaperone family. HslU subfamily. A double ring-shaped homohexamer of HslV is capped on each side by a ring-shaped HslU homohexamer. The assembly of the HslU/HslV complex is dependent on binding of ATP.

The protein localises to the cytoplasm. ATPase subunit of a proteasome-like degradation complex; this subunit has chaperone activity. The binding of ATP and its subsequent hydrolysis by HslU are essential for unfolding of protein substrates subsequently hydrolyzed by HslV. HslU recognizes the N-terminal part of its protein substrates and unfolds these before they are guided to HslV for hydrolysis. This chain is ATP-dependent protease ATPase subunit HslU, found in Enterococcus faecalis (strain ATCC 700802 / V583).